Reading from the N-terminus, the 110-residue chain is Ig lambda-1 chain V region S178 (110 aa).

Residues 1 to 106 form the Ig-like domain; that stretch reads QAVVTQESAL…RWVFGGGTKL (106 aa).

In Mus musculus (Mouse), this protein is Ig lambda-1 chain V region S178.